A 491-amino-acid polypeptide reads, in one-letter code: MPVDLNFTIAAPLLALAAGALLILLLDLLFRYETIQGPMYVAAVGAVLVAGWYLVPLWRGAAEPFGFHGMLVMDRFAAVYGLVLLGAALLAILLSFGRVREDQSGYLALLLWAAMGMVLLGGAGNLMVIFLGIELLSLALYVMIAFAPKRMAAREAAFKYFVLGSVAAAFLIFGFALIYGAAGTMSLTGIAAAARSFTSEGAWSVGLYYKVGVGLAIVGLAFKMALVPFHIWAPDVYQGAPTPVTAFMAIGTKAAAFAAMARLLVAAVPQAYQPSFLLPLSILAFASMMLGATVGIWQSDLKRLMAYSGIANAGYLIMAIPGLGLDGLSAAAYYLAAYGFATMGVFAVVRILEADGVDGSQLANLKGLFYRSPWVGVCLAVLFFGLIGVPPTGGFVGKFLLAIAAVRGGAWIVLTGLILSTGISAYVYLKVIGTAFTRTKVAPQPEEGEEPHPPTRTAAQVVLAIATAGTLVLGVLPGPVSELLRVALAGM.

Helical transmembrane passes span 9–29 (IAAP…LDLL), 38–58 (PMYV…VPLW), 76–96 (FAAV…LLSF), 104–124 (SGYL…GGAG), 126–146 (LMVI…MIAF), 161–181 (FVLG…IYGA), 211–231 (VGVG…PFHI), 246–266 (AFMA…LLVA), 276–296 (FLLP…TVGI), 304–324 (LMAY…PGLG), 329–349 (SAAA…FAVV), 375–395 (VGVC…TGGF), 410–432 (AWIV…LKVI), and 461–481 (VVLA…GPVS).

Belongs to the complex I subunit 2 family. In terms of assembly, NDH-1 is composed of 14 different subunits. Subunits NuoA, H, J, K, L, M, N constitute the membrane sector of the complex.

It is found in the cell membrane. The enzyme catalyses a quinone + NADH + 5 H(+)(in) = a quinol + NAD(+) + 4 H(+)(out). Its function is as follows. NDH-1 shuttles electrons from NADH, via FMN and iron-sulfur (Fe-S) centers, to quinones in the respiratory chain. The immediate electron acceptor for the enzyme in this species is believed to be a menaquinone. Couples the redox reaction to proton translocation (for every two electrons transferred, four hydrogen ions are translocated across the cytoplasmic membrane), and thus conserves the redox energy in a proton gradient. The protein is NADH-quinone oxidoreductase subunit N 1 of Symbiobacterium thermophilum (strain DSM 24528 / JCM 14929 / IAM 14863 / T).